A 1033-amino-acid polypeptide reads, in one-letter code: uncharacterized protein (1033 aa).

This is an uncharacterized protein from Mycoplasma pneumoniae (strain ATCC 29342 / M129 / Subtype 1) (Mycoplasmoides pneumoniae).